We begin with the raw amino-acid sequence, 434 residues long: Iron transporter MagA (434 aa).

The next 10 membrane-spanning stretches (helical) occupy residues 6-26 (PELTYAAIVALAAVLCGGMMT), 31-51 (PAVVGYILAGVVLGPSGFGLV), 56-76 (AVATLAEFGVLMLLFVIGMKL), 86-106 (KTAIFTTVLQIAGSVGTALLL), 113-133 (SLGLAVVLGCAVAVSSTAVVI), 176-196 (LLPADMARVVLSVLFLVLLFW), 269-289 (SVLLMVFFLSIGLLLDFKFIW), 294-314 (TVLTLLAMVTLFKTALNVTAL), 321-341 (WPSAFLAGVALAQIGEFSFLL), and 357-377 (KLVVAVTVLSLVLSPFWLFTM).

The protein belongs to the monovalent cation:proton antiporter 2 (CPA2) transporter (TC 2.A.37) family.

Its subcellular location is the membrane. In terms of biological role, iron transporter, which is required for the synthesis of bacterial magnetic particles (BMPs). Probably involved in the transport of iron from the environment into the cytoplasm across the cell membrane, and then from the cytoplasm into the BMP lipid vesicle across the BMP membrane. This is Iron transporter MagA (magA) from Paramagnetospirillum magneticum (strain ATCC 700264 / AMB-1) (Magnetospirillum magneticum).